Reading from the N-terminus, the 174-residue chain is Rubredoxin-2 (174 aa).

A Rubredoxin-like 1 domain is found at 1–53 (MAKYQCPDCEYIYDEVAGHPHEGFPPGTSWETIPEEWACPDCAVRDKADFVVI). Residues Cys6, Cys9, Cys39, and Cys42 each coordinate Fe cation. Residues 56-65 (GSASPASGAA) are compositionally biased toward low complexity. The segment at 56–115 (GSASPASGAATPEVRTATTPPKAEASPQKSTGASTPSANNKAKAKAKAKPARAKSSKDST) is disordered. Residues 97–109 (AKAKAKAKPARAK) are compositionally biased toward basic residues. Residues 121 to 172 (FRKWICITCGHIYDEALGDETEGFAPGTLFEDIPDDWCCPDCGATKEDYVLH) enclose the Rubredoxin-like 2 domain. The Fe cation site is built by Cys126, Cys129, Cys159, and Cys162.

This sequence belongs to the rubredoxin family. The cofactor is Fe(3+).

The protein resides in the cytoplasm. The protein operates within hydrocarbon metabolism; alkane degradation. In terms of biological role, involved in the hydrocarbon hydroxylating system, which transfers electrons from NADH to rubredoxin reductase and then through rubredoxin to alkane 1 monooxygenase. The polypeptide is Rubredoxin-2 (alkG) (Alcanivorax borkumensis (strain ATCC 700651 / DSM 11573 / NCIMB 13689 / SK2)).